We begin with the raw amino-acid sequence, 505 residues long: MSVVILDFGSQFTRLIARRLRELGAYSVILPGTASLERIAQENPQGIVLSGGPSSVYDANAPRPAPGVLDLDVPILGVCYGMQFLAHEAGGAVQRAGKREYGKADLTRYGGQLFAGIQGEFVAWMSHSDSVTQLPQGYEVIAATEDTPVAGIENTVTRRYGVQFHPEVVHTPKGGQLLANFLEICGVARDWNAEHIVDELIEDVRRQVGAGRVLLAISGGVDSSTLGLLLARAIGDRLTAVFIDHGLLRLGEREQVEAALRPLGVNLVTVDASEEFLGALAGVSDPEQKRKIIGREFIRAFEREARKYGPFDFLAQGTLYPDVIESAGGEGAANIKSHHNVGGLPEDLAFKLVEPFRTLFKDEVREIARLLGLPDAIRMRHPFPGPGLAIRCLGEVTREKLDILKRVDDIFISGLREFGLYDGCSQALAVLTPIQSVGVMGDERTYSYTAALRAVTTDDFMTAEWARLPYEFLATMSNRIVNQVHEINRVVYDITGKPPATIEWE.

In terms of domain architecture, Glutamine amidotransferase type-1 spans 2–190 (SVVILDFGSQ…FLEICGVARD (189 aa)). Cys-79 acts as the Nucleophile in catalysis. Catalysis depends on residues His-165 and Glu-167. Positions 191-380 (WNAEHIVDEL…LGLPDAIRMR (190 aa)) constitute a GMPS ATP-PPase domain. ATP is bound at residue 218 to 224 (SGGVDSS).

Homodimer.

It catalyses the reaction XMP + L-glutamine + ATP + H2O = GMP + L-glutamate + AMP + diphosphate + 2 H(+). The protein operates within purine metabolism; GMP biosynthesis; GMP from XMP (L-Gln route): step 1/1. Functionally, catalyzes the synthesis of GMP from XMP. This chain is GMP synthase [glutamine-hydrolyzing], found in Deinococcus geothermalis (strain DSM 11300 / CIP 105573 / AG-3a).